Consider the following 1836-residue polypeptide: Sodium channel protein type 4 subunit alpha (1836 aa).

The Cytoplasmic portion of the chain corresponds to 1-131; the sequence is MARPSLCTLV…RGAIKVLIHA (131 aa). The span at 39 to 60 shows a compositional bias: basic and acidic residues; sequence LQRNKQMEIEEPERKPRSDLEA. The segment at 39-63 is disordered; the sequence is LQRNKQMEIEEPERKPRSDLEAGKN. The stretch at 113–454 is one I repeat; it reads LLSPFSVVRR…VVAMAYAEQN (342 aa). A helical membrane pass occupies residues 132-150; the sequence is LFSMFIMITILTNCVFMTM. Topologically, residues 151–157 are extracellular; the sequence is SDPPPWS. A helical membrane pass occupies residues 158 to 178; the sequence is KNVEYTFTGIYTFESLIKILA. Over 179-192 the chain is Cytoplasmic; it reads RGFCVDDFTFLRDP. Residues 193 to 210 form a helical membrane-spanning segment; the sequence is WNWLDFSVIMMAYLTEFV. At 211–216 the chain is on the extracellular side; the sequence is DLGNIS. Asn-214 carries an N-linked (GlcNAc...) asparagine glycan. The chain crosses the membrane as a helical span at residues 217–233; that stretch reads ALRTFRVLRALKTITVI. Residues 234-252 are Cytoplasmic-facing; that stretch reads PGLKTIVGALIQSVKKLSD. Residues 253 to 272 form a helical membrane-spanning segment; sequence VMILTVFCLSVFALVGLQLF. The Extracellular portion of the chain corresponds to 273-391; that stretch reads MGNLRQKCVR…PNYGYTSYDT (119 aa). Residues Cys-280 and Cys-360 are joined by a disulfide bond. 8 N-linked (GlcNAc...) asparagine glycosylation sites follow: Asn-288, Asn-291, Asn-297, Asn-303, Asn-315, Asn-321, Asn-333, and Asn-362. A disulfide bond links Cys-369 and Cys-375. Positions 392–416 form an intramembrane region, pore-forming; the sequence is FSWAFLALFRLMTQDYWENLFQLTL. Topologically, residues 417–423 are extracellular; it reads RAAGKTY. Residues 424-444 traverse the membrane as a helical segment; sequence MIFFVVIIFLGSFYLINLILA. Residues 445 to 578 lie on the Cytoplasmic side of the membrane; it reads VVAMAYAEQN…NIIHLIVMDP (134 aa). Positions 493-530 are disordered; the sequence is GGEADGDPAHGKDCNGSLDTSQGEKGAPRQSSSGDSGI. Polar residues predominate over residues 509–528; sequence SLDTSQGEKGAPRQSSSGDS. The II repeat unit spans residues 560 to 832; it reads CCAPWLKFKN…QIAIGRIKLG (273 aa). The helical transmembrane segment at 579–597 threads the bilayer; sequence FVDLGITICIVLNTLFMAM. Residues 598 to 608 lie on the Extracellular side of the membrane; the sequence is EHYPMTEHFDN. Residues 609–628 traverse the membrane as a helical segment; sequence VLTVGNLVFTGIFTAEMVLK. At 629–642 the chain is on the cytoplasmic side; sequence LIAMDPYEYFQQGW. A helical membrane pass occupies residues 643–662; it reads NIFDSIIVTLSLVELGLANV. Over 663-664 the chain is Extracellular; it reads QG. A helical transmembrane segment spans residues 665 to 682; it reads LSVLRSFRLLRVFKLAKS. At 683-698 the chain is on the cytoplasmic side; it reads WPTLNMLIKIIGNSVG. Residues 699-717 traverse the membrane as a helical segment; it reads ALGNLTLVLAIIVFIFAVV. The Extracellular segment spans residues 718–746; the sequence is GMQLFGKSYKECVCKIALDCNLPRWHMHD. A disulfide bond links Cys-731 and Cys-737. Residues 747-767 constitute an intramembrane region (pore-forming); that stretch reads FFHSFLIVFRILCGEWIETMW. At 768-778 the chain is on the extracellular side; it reads DCMEVAGQAMC. Cys-769 and Cys-778 are disulfide-bonded. Residues 779–797 form a helical membrane-spanning segment; that stretch reads LTVFLMVMVIGNLVVLNLF. At 798–1032 the chain is on the cytoplasmic side; the sequence is LALLLSSFSA…ACFKIVEHNW (235 aa). Disordered stretches follow at residues 863–885 and 930–992; these read GAGEAGEAGETAPEDEKKEPPEE and ESDL…QPEE. Positions 876–885 are enriched in basic and acidic residues; the sequence is EDEKKEPPEE. Acidic residues-rich tracts occupy residues 930–947 and 975–992; these read ESDLEMPTEEETDTFSEP and EDPEEQAEENPEGEQPEE. One copy of the III repeat lies at 1013–1326; the sequence is RGKKWWTLRR…KKYYNAMKKL (314 aa). Residues 1033–1050 traverse the membrane as a helical segment; that stretch reads FETFIVFMILLSSGALAF. Over 1051-1063 the chain is Extracellular; that stretch reads EDIYIEQRRVIRT. The chain crosses the membrane as a helical span at residues 1064 to 1082; that stretch reads ILEYADKVFTYIFIMEMLL. The Cytoplasmic segment spans residues 1083–1096; it reads KWVAYGFKVYFTNA. Residues 1097–1115 form a helical membrane-spanning segment; it reads WCWLDFLIVDVSIISLVAN. Residues 1116 to 1123 lie on the Extracellular side of the membrane; that stretch reads WLGYSELG. A helical transmembrane segment spans residues 1124–1142; that stretch reads PIKSLRTLRALRPLRALSR. Residues 1143-1159 are Cytoplasmic-facing; that stretch reads FEGMRVVVNALLGAIPS. A helical membrane pass occupies residues 1160 to 1179; sequence IMNVLLVCLIFWLIFSIMGV. The Extracellular segment spans residues 1180 to 1230; the sequence is NLFAGKFYYCINTTTSERFDISEVNNKSECESLMHTGQVRWLNVKVNYDNV. Cys-1189 and Cys-1209 are disulfide-bonded. N-linked (GlcNAc...) asparagine glycans are attached at residues Asn-1191 and Asn-1205. The pore-forming intramembrane region spans 1231 to 1252; it reads GLGYLSLLQVATFKGWMDIMYA. The Extracellular segment spans residues 1253-1269; that stretch reads AVDSREKEEQPQYEVNL. The chain crosses the membrane as a helical span at residues 1270-1291; that stretch reads YMYLYFVIFIIFGSFFTLNLFI. The Cytoplasmic segment spans residues 1292–1354; the sequence is GVIIDNFNQQ…MVYDLVTKQA (63 aa). An important for rapid channel inactivation region spans residues 1310 to 1312; it reads IFM. An IV repeat occupies 1335 to 1633; it reads IPRPQNKIQG…WEKFDPDATQ (299 aa). The chain crosses the membrane as a helical span at residues 1355 to 1372; it reads FDITIMILICLNMVTMMV. At 1373-1383 the chain is on the extracellular side; sequence ETDNQSQLKVD. The chain crosses the membrane as a helical span at residues 1384 to 1402; the sequence is ILYNINMIFIIIFTGECVL. The Cytoplasmic segment spans residues 1403–1414; that stretch reads KMLALRQYYFTV. Residues 1415–1432 traverse the membrane as a helical segment; it reads GWNIFDFVVVILSIVGLA. At 1433-1445 the chain is on the extracellular side; that stretch reads LSDLIQKYFVSPT. A helical transmembrane segment spans residues 1446 to 1462; that stretch reads LFRVIRLARIGRVLRLI. Residues 1463-1481 lie on the Cytoplasmic side of the membrane; that stretch reads RGAKGIRTLLFALMMSLPA. Residues 1482-1499 form a helical membrane-spanning segment; the sequence is LFNIGLLLFLVMFIYSIF. The Extracellular portion of the chain corresponds to 1500–1521; sequence GMSNFAYVKKESGIDDMFNFET. Residues 1522 to 1544 constitute an intramembrane region (pore-forming); that stretch reads FGNSIICLFEITTSAGWDGLLNP. Residues 1545 to 1574 lie on the Extracellular side of the membrane; that stretch reads ILNSGPPDCDPNLENPGTSVKGDCGNPSIG. Cys-1553 and Cys-1568 are disulfide-bonded. A helical membrane pass occupies residues 1575–1597; it reads ICFFCSYIIISFLIVVNMYIAII. The Cytoplasmic segment spans residues 1598–1836; the sequence is LENFNVATEE…VRPGVKESLV (239 aa). One can recognise an IQ domain in the interval 1727–1756; that stretch reads EEVCAIKIQRAYRRHLLQRSMKQASYMYRH. Residues 1778 to 1836 form a disordered region; that stretch reads KMYGHENGNSSSPSPEEKGEAGDAGPTMGLMPISPSDTAWPPAPPPGQTVRPGVKESLV.

This sequence belongs to the sodium channel (TC 1.A.1.10) family. Nav1.4/SCN4A subfamily. The Nav1.4 voltage-gated sodium channel consists of an ion-conducting alpha subunit SCN4A which is functional on its own and a regulatory beta subunit SCN1B. SCN1B strongly enhances the presence of SCN4A at the cell surface. SCN1B is also required for rapid channel inactivation and recovery after inactivation. It prevents the decrease of channel activity in response to repetitive, high-frequency depolarizations. Interacts with the syntrophins SNTA1, SNTB1 and SNTB2 (via PDZ domain); probably links SCN4A to the actin cytoskeleton and the extracellular matrix via the dystrophin-associated protein complex and regulates its localization in muscle cells. Interacts with TMEM233; probable regulator of the channel.

It localises to the cell membrane. The catalysed reaction is Na(+)(in) = Na(+)(out). Its activity is regulated as follows. The channel is inhibited by tetrodotoxin and saxitoxin. Inhibited by the conotoxin GVIIJ. Pore-forming subunit of Nav1.4, a voltage-gated sodium (Nav) channel that directly mediates the depolarizing phase of action potentials in excitable membranes. Navs, also called VGSCs (voltage-gated sodium channels) or VDSCs (voltage-dependent sodium channels), operate by switching between closed and open conformations depending on the voltage difference across the membrane. In the open conformation they allow Na(+) ions to selectively pass through the pore, along their electrochemical gradient. The influx of Na+ ions provokes membrane depolarization, initiating the propagation of electrical signals throughout cells and tissues. Highly expressed in skeletal muscles, Nav1.4 generates the action potential crucial for muscle contraction. The sequence is that of Sodium channel protein type 4 subunit alpha from Homo sapiens (Human).